Here is a 172-residue protein sequence, read N- to C-terminus: MDRAQKQESIESLKSVFADAGAVVVTHYMGLTVAEMTDLRLRLRKEGAAIKVVKNTLALKALDGKLGDKGDKLFTGPVAIAYGPDAVSAAKIAVQFAKENDKLKIVGGVLDQTNVLDEAGVRALATLPSLDELRGKLIGLIQAPATKIAGVLQAPAAQLARVFNAYATKDAA.

The protein belongs to the universal ribosomal protein uL10 family. Part of the ribosomal stalk of the 50S ribosomal subunit. The N-terminus interacts with L11 and the large rRNA to form the base of the stalk. The C-terminus forms an elongated spine to which L12 dimers bind in a sequential fashion forming a multimeric L10(L12)X complex.

In terms of biological role, forms part of the ribosomal stalk, playing a central role in the interaction of the ribosome with GTP-bound translation factors. This is Large ribosomal subunit protein uL10 (rplJ) from Caulobacter vibrioides (strain ATCC 19089 / CIP 103742 / CB 15) (Caulobacter crescentus).